A 312-amino-acid chain; its full sequence is Glyceraldehyde-3-phosphate dehydrogenase, cytosolic (312 aa).

NAD(+)-binding positions include 5-6 (RI) and Asp27. D-glyceraldehyde 3-phosphate contacts are provided by residues 144–146 (SCT), Thr175, 204–205 (TG), and Arg227. Residue Cys145 is the Nucleophile of the active site. Position 309 (Asn309) interacts with NAD(+).

It belongs to the glyceraldehyde-3-phosphate dehydrogenase family. In terms of assembly, homotetramer.

The protein localises to the cytoplasm. It carries out the reaction D-glyceraldehyde 3-phosphate + phosphate + NAD(+) = (2R)-3-phospho-glyceroyl phosphate + NADH + H(+). It participates in carbohydrate degradation; glycolysis; pyruvate from D-glyceraldehyde 3-phosphate: step 1/5. Key enzyme in glycolysis that catalyzes the first step of the pathway by converting D-glyceraldehyde 3-phosphate (G3P) into 3-phospho-D-glyceroyl phosphate. Essential for the maintenance of cellular ATP levels and carbohydrate metabolism. This chain is Glyceraldehyde-3-phosphate dehydrogenase, cytosolic (GapC), found in Scenedesmus vacuolatus (Green alga).